A 320-amino-acid polypeptide reads, in one-letter code: Ribosomal RNA small subunit methyltransferase H (320 aa).

Residues 42 to 44 (GGH), Asp62, Phe86, Asp108, and Gln115 each bind S-adenosyl-L-methionine.

Belongs to the methyltransferase superfamily. RsmH family.

The protein localises to the cytoplasm. It carries out the reaction cytidine(1402) in 16S rRNA + S-adenosyl-L-methionine = N(4)-methylcytidine(1402) in 16S rRNA + S-adenosyl-L-homocysteine + H(+). Its function is as follows. Specifically methylates the N4 position of cytidine in position 1402 (C1402) of 16S rRNA. This is Ribosomal RNA small subunit methyltransferase H from Yersinia pseudotuberculosis serotype O:1b (strain IP 31758).